The sequence spans 344 residues: MSNADQHMDVDEDEYLYGETIEERNDGVTVSNAKSPEQASEESDDSDIEFIIETKPGERAEPLGGSIATLGSTRPSAKPQVEKTAVEVKTTEPQDLSTAETAPKVDIDAVPTIDGKNIFEIDLESFDDKPWRKPGADISDYFNYGFDEFTWAAYCAKQTTLRDDFSPQKFMASLAQIPGPLPSGNVPSPAEFQAMMASGFPPFMPIPPPIGGPQEDMGYSRNFPVHASSNYNTTHTSGGGVHSGAATPNAYVNNNPSSSRRESESPANSPNITSSAGMTHAQPTHNPTSSYGNGASTNYNASRPPSNHPHSSNYPSSSRRKPSPDRYSNYSSRGSGGRYRRNRY.

Disordered regions lie at residues 1 to 99 (MSNA…LSTA) and 230 to 344 (NYNT…RNRY). Residues 28–38 (VTVSNAKSPEQ) are compositionally biased toward polar residues. Residues 39 to 50 (ASEESDDSDIEF) show a composition bias toward acidic residues. The span at 80 to 92 (QVEKTAVEVKTTE) shows a compositional bias: basic and acidic residues. Over residues 243-258 (SGAATPNAYVNNNPSS) the composition is skewed to low complexity. Polar residues predominate over residues 271-301 (NITSSAGMTHAQPTHNPTSSYGNGASTNYNA). Residues 302–317 (SRPPSNHPHSSNYPSS) show a composition bias toward low complexity.

This sequence belongs to the FIP1 family.

It localises to the nucleus. Functionally, pre-mRNA polyadenylation factor that directly interacts with poly(A) polymerase. This is Pre-mRNA polyadenylation factor fip1 from Schizosaccharomyces pombe (strain 972 / ATCC 24843) (Fission yeast).